Reading from the N-terminus, the 121-residue chain is UPF0102 protein Mvan_2202 (121 aa).

Belongs to the UPF0102 family.

This is UPF0102 protein Mvan_2202 from Mycolicibacterium vanbaalenii (strain DSM 7251 / JCM 13017 / BCRC 16820 / KCTC 9966 / NRRL B-24157 / PYR-1) (Mycobacterium vanbaalenii).